A 367-amino-acid polypeptide reads, in one-letter code: DNA replication and repair protein RecF (367 aa).

30-37 lines the ATP pocket; that stretch reads GANGSGKT.

This sequence belongs to the RecF family.

It is found in the cytoplasm. The RecF protein is involved in DNA metabolism; it is required for DNA replication and normal SOS inducibility. RecF binds preferentially to single-stranded, linear DNA. It also seems to bind ATP. This chain is DNA replication and repair protein RecF, found in Pseudomonas putida (strain GB-1).